We begin with the raw amino-acid sequence, 992 residues long: MKGLSGSRSHHHGITCESACDSLSHHSDHKPYLLSPVDHHPADHPYYTQRNSFQAECVGPFSDPLASSTFPRRHYTSQQELKDESALVPRTLATKANRLPTNLLDQFERQLPLSRDGYHTLQYKRTAVEHRSDSPGRIRHLVHSVQKLFTKSHSLEGASKGGVNGGKASPDGSQTVRYGKRSKSKERRSEPKARSNASNASPTSPSWWSSDDNLDGDMCLYHTPSGVMTMGRCPDRSVSQYFMGAYNTISEQAVKASRSNNDVKCSTCANLPVTLDAPLLKKSAWSSTLTVSRAREVYQKASVNMDQAVVKSEACQQERSCQYLQVPQDEWTGYTPRGKDDEIPCRRMRSGSYIKAMGDEDSGDSDTSPKPSPKVAARRESYLKATQPSLTELTTLKISNEHSPKLQIRSHSYLRAVSEVSINRSLDSLDPAGLLTSPKFRSRNESYMRAMSTISQVSEMEVNGQFESVCESVFSELESQAVEALDLPMPGCFRMRSHSYVRAIEKGCSQDDECVSLRSSSPPRTTTTVRTIQSSTGVIKLSSAVEVSSCITTYKKTPPPVPPRTTTKPFISITAQSSTESAQDAYMDGQGQRGDMISQSGLSNSTESLDSMKALTAAIEAANAQIHGPASQHMGSNAAAVTTTTTIATVTTEDRKKDFKKNRCLSIGIQVDDAEESEKMAESKTSSKFQSVGVQVEEEKCFRRFTRSNSVTTAVQADLDFHDNLENSLESIEDNSCPGPMARQFSRDASTSTVSIQGSGNHYHACAADDDFDTDFDPSILPPPDPWIDSITEDPLEAVQRSVCHRDGHWFLKLLQAERDRMEGWCKQMEREERENNLPEDILGKIRTAVGSAQLLMAQKFYQFRELCEENLNPNAHPRPTSQDLAGFWDMLQLSIENISMKFDELHQLKANNWKQMDPLDKKERRAPPPVPKKPAKGPAPLIRERSLESSQRQEARKRLMAAKRAASVRQNSATESAESIEIYIPEAQTRL.

Disordered regions lie at residues 154–209 (SLEG…SWWS) and 355–375 (KAMGDEDSGDSDTSPKPSPKV). Residue serine 169 is modified to Phosphoserine. Positions 195 to 209 (SNASNASPTSPSWWS) are enriched in low complexity. 13 positions are modified to phosphoserine: serine 362, serine 365, serine 368, serine 372, serine 389, serine 418, serine 421, serine 425, serine 428, serine 437, serine 509, serine 516, and serine 578. Threonine 579 is modified (phosphothreonine). Phosphoserine occurs at positions 581 and 605. A Phosphothreonine modification is found at threonine 606. 2 positions are modified to phosphoserine: serine 608 and serine 611. 2 interaction with DYL2 regions span residues 665–676 (LSIGIQVDDAEE) and 687–698 (SKFQSVGVQVEE). The segment at 914–980 (WKQMDPLDKK…QNSATESAES (67 aa)) is disordered. Basic and acidic residues-rich tracts occupy residues 918–927 (DPLDKKERRA) and 943–958 (IRERSLESSQRQEARK). Serine 947 bears the Phosphoserine mark. Residues 969-978 (VRQNSATESA) are compositionally biased toward polar residues. Positions 990 to 992 (TRL) match the PDZ-binding motif.

The protein belongs to the SAPAP family. Interacts with guanylate kinase-like domain of DLG1, DLG2, DLG3, DLG4 and AIP1. Interacts with the PDZ domain of SHANK1, SHANK2 and SHANK3. Found in a complex with DLG4 and SHANK1, SHANK2 or SHANK3. Found in a complex with DLG4 and BEGAIN. Interacts with DYL2 and LRFN1. Interacts with MPP2 (via the SH3-Guanylate kinase-like sub-module). Post-translationally, ubiquitinated by TRIM3; leading to proteasomal degradation. In terms of tissue distribution, expressed in brain and testis.

It is found in the cell membrane. The protein resides in the postsynaptic density. The protein localises to the synapse. Functionally, part of the postsynaptic scaffold in neuronal cells. This chain is Disks large-associated protein 1, found in Rattus norvegicus (Rat).